A 368-amino-acid chain; its full sequence is MQFESDFRFDMDDSFSMCSQTLPCPSAGSSFSSASSAYEPFTPTSRRSTPNELSLDFEGAYNPFATHHSELTSPSGHMSKYMFGGPVKGEPEHMSFNEALPTTPMKKLDGMVTPDYDHMLEMNLASRHSIGSITPSGSFPMYTISPTTMGPTSFMMTPTHSLSGSEIAESTSSWSCSNESPISFFPQRGLGPLELEGLDMDRHPQSPLGTYHLHAPPSPGRLRAHRKMMVHEIQRKTNELQRAQIRASRKVSGSKSDGGVDVVRRAMCKCDYPGCHKAFRRNEHLKRHKQTFHGEGPNRFSCEFCGKDQFNRQDNLNNHRKLHARPNSRNRGVEFIPAAVPIIEQEERSRKRRAPPKSKSADKRVDDY.

A C2H2-type 1; degenerate zinc finger spans residues 268–292 (CKCDYPGCHKAFRRNEHLKRHKQTF). The C2H2-type 2 zinc finger occupies 300–323 (FSCEFCGKDQFNRQDNLNNHRKLH). The tract at residues 338–368 (AAVPIIEQEERSRKRRAPPKSKSADKRVDDY) is disordered. Basic and acidic residues predominate over residues 359–368 (KSADKRVDDY).

It localises to the nucleus. In terms of biological role, brlA, abaA and wetA are pivotal regulators of conidiophore development and conidium maturation. They act individually and together to regulate their own expression and that of numerous other sporulation-specific genes. BrlA, abaA and wetA act together to positively regulate the expression of the Pks1 gene cluster that mediates the biosynthesis of an anthraquinone derivative pigment that contributes to conidial pigmentation that provides protection from UV radiation, heat and cold stress. The sequence is that of C2H2 type master regulator of conidiophore development BrlA from Metarhizium robertsii (strain ARSEF 23 / ATCC MYA-3075) (Metarhizium anisopliae (strain ARSEF 23)).